Consider the following 173-residue polypeptide: MTIVLGIDPGSRITGYGVICKQGKILSYLASGCIRTKTNDFPNRLKRIYIDVNQVITQFKPLVFAIEQLFIAKNMNSALKLSQARSVAIVVAMNNNIPVFEYAARQVKKTLVGIGSADKHQVKHMVRTILNLSNNPQTDAADALAIAITHCYISENTNRISSKNLILARGRLR.

Catalysis depends on residues D8, E67, and D139. The Mg(2+) site is built by D8, E67, and D139.

It belongs to the RuvC family. As to quaternary structure, homodimer which binds Holliday junction (HJ) DNA. The HJ becomes 2-fold symmetrical on binding to RuvC with unstacked arms; it has a different conformation from HJ DNA in complex with RuvA. In the full resolvosome a probable DNA-RuvA(4)-RuvB(12)-RuvC(2) complex forms which resolves the HJ. Mg(2+) serves as cofactor.

It is found in the cytoplasm. The enzyme catalyses Endonucleolytic cleavage at a junction such as a reciprocal single-stranded crossover between two homologous DNA duplexes (Holliday junction).. The RuvA-RuvB-RuvC complex processes Holliday junction (HJ) DNA during genetic recombination and DNA repair. Endonuclease that resolves HJ intermediates. Cleaves cruciform DNA by making single-stranded nicks across the HJ at symmetrical positions within the homologous arms, yielding a 5'-phosphate and a 3'-hydroxyl group; requires a central core of homology in the junction. The consensus cleavage sequence is 5'-(A/T)TT(C/G)-3'. Cleavage occurs on the 3'-side of the TT dinucleotide at the point of strand exchange. HJ branch migration catalyzed by RuvA-RuvB allows RuvC to scan DNA until it finds its consensus sequence, where it cleaves and resolves the cruciform DNA. The protein is Crossover junction endodeoxyribonuclease RuvC of Baumannia cicadellinicola subsp. Homalodisca coagulata.